The primary structure comprises 442 residues: Metacaspase-5 (442 aa).

A signal peptide spans 1 to 18 (MDLLLGVLSSGILQNALP). The segment at 19–62 (FVAGVGRVKRPKRVKLEEAFREAHLCRPVIPYRAPTPYTGGRVK) is important for catalytic activity. 2 N-linked (GlcNAc...) asparagine glycosylation sites follow: Asn69 and Asn112. The active site involves His146. 3 residues coordinate Ca(2+): Asp161, Asp177, and Asp178. Residue Cys201 is part of the active site. Residue Asp208 participates in Ca(2+) binding. 4 N-linked (GlcNAc...) asparagine glycosylation sites follow: Asn234, Asn257, Asn282, and Asn331. A negatively regulates catalytic activity region spans residues 336–442 (HYVPQQYLQP…QYLSGVGKPL (107 aa)). Positions 348 to 371 (PPQPYYPPPQPQQPYYPPPQPQQP) are enriched in pro residues. The interval 348 to 442 (PPQPYYPPPQ…QYLSGVGKPL (95 aa)) is disordered. Low complexity predominate over residues 372 to 382 (YYPSSQLPTQY). Polar residues predominate over residues 422 to 434 (PSDQSTYYSSAQY).

The protein belongs to the peptidase C14B family. Post-translationally, in epimastigotes, the unprocessed enzyme appears to be the main form. Auto-processing is dispensable for catalytic activity towards small oligopeptide substrates.

It is found in the recycling endosome. With respect to regulation, activated by Ca(2+). In terms of biological role, cysteine protease that cleaves specifically after arginine or lysine residues. May play a role in apoptosis. The protein is Metacaspase-5 of Trypanosoma cruzi (strain CL Brener).